Consider the following 111-residue polypeptide: MKRLLSLIFLVFVFFAVMLTPPALAGDAAAGKTVFTAKCAQCHLGGKNLVNPAKTLSKADLEANGMASLDAIITQVTNGKAAMPAFGKLLTAEQIENVATYVLAQAEADWK.

A signal peptide spans 1–25 (MKRLLSLIFLVFVFFAVMLTPPALA). Residues Cys39, Cys42, His43, and Met83 each coordinate heme c.

It belongs to the cytochrome c family. PetJ subfamily. In terms of assembly, monomer. In terms of processing, binds 1 heme c group covalently per subunit.

It localises to the cellular thylakoid lumen. Functionally, functions as an electron carrier between membrane-bound cytochrome b6-f and photosystem I in oxygenic photosynthesis. This chain is Cytochrome c6, found in Rippkaea orientalis (strain PCC 8801 / RF-1) (Cyanothece sp. (strain PCC 8801)).